The chain runs to 329 residues: Putative glucose-6-phosphate 1-epimerase (329 aa).

Over residues 1–13 (MAAPAPAGAAASP) the composition is skewed to low complexity. The tract at residues 1–20 (MAAPAPAGAAASPSPKPQLP) is disordered. Residues Arg82, Gln100, and Arg105 each contribute to the substrate site. His183 is a catalytic residue. Substrate is bound at residue Asp228. The active site involves Glu287.

This sequence belongs to the glucose-6-phosphate 1-epimerase family.

It catalyses the reaction alpha-D-glucose 6-phosphate = beta-D-glucose 6-phosphate. This Cenchrus ciliaris (Buffelgrass) protein is Putative glucose-6-phosphate 1-epimerase.